A 554-amino-acid chain; its full sequence is CTP synthase (554 aa).

The tract at residues 1 to 265 (MTPLIFVTGG…DELVIVQFKL (265 aa)) is amidoligase domain. Ser-13 serves as a coordination point for CTP. Ser-13 contributes to the UTP binding site. ATP is bound by residues 14-19 (SLGKGI) and Asp-71. The Mg(2+) site is built by Asp-71 and Glu-139. CTP is bound by residues 146–148 (DIE), 186–191 (KTKPTQ), and Lys-222. Residues 186-191 (KTKPTQ) and Lys-222 contribute to the UTP site. One can recognise a Glutamine amidotransferase type-1 domain in the interval 292-545 (TIAVVGKYVD…VRAAREKKAG (254 aa)). Residue Gly-353 participates in L-glutamine binding. The active-site Nucleophile; for glutamine hydrolysis is the Cys-380. Residues 381–384 (YGMQ), Glu-404, and Arg-471 each bind L-glutamine. Catalysis depends on residues His-518 and Glu-520.

The protein belongs to the CTP synthase family. Homotetramer.

It carries out the reaction UTP + L-glutamine + ATP + H2O = CTP + L-glutamate + ADP + phosphate + 2 H(+). The catalysed reaction is L-glutamine + H2O = L-glutamate + NH4(+). The enzyme catalyses UTP + NH4(+) + ATP = CTP + ADP + phosphate + 2 H(+). It functions in the pathway pyrimidine metabolism; CTP biosynthesis via de novo pathway; CTP from UDP: step 2/2. With respect to regulation, allosterically activated by GTP, when glutamine is the substrate; GTP has no effect on the reaction when ammonia is the substrate. The allosteric effector GTP functions by stabilizing the protein conformation that binds the tetrahedral intermediate(s) formed during glutamine hydrolysis. Inhibited by the product CTP, via allosteric rather than competitive inhibition. Catalyzes the ATP-dependent amination of UTP to CTP with either L-glutamine or ammonia as the source of nitrogen. Regulates intracellular CTP levels through interactions with the four ribonucleotide triphosphates. The polypeptide is CTP synthase (Xanthomonas oryzae pv. oryzae (strain MAFF 311018)).